The chain runs to 673 residues: Sodium/myo-inositol cotransporter 2 (673 aa).

Residues 1-27 (MESTTSSPQPPPSDALEAFPQKSMEPA) lie on the Extracellular side of the membrane. A helical membrane pass occupies residues 28 to 48 (DIVVLVLYFLFVLAVGLWSTV). Residues 49–56 (RTKRDTVK) lie on the Cytoplasmic side of the membrane. Residues 57–77 (GYFLAGGDMVWWPVGASLFAS) traverse the membrane as a helical segment. Position 78 (N78) is a topological domain, extracellular. The helical transmembrane segment at 79–99 (VGSGHFIGLAGSGAAVGISVA) threads the bilayer. Topologically, residues 100-102 (AYE) are cytoplasmic. Residues 103–123 (LNGLFSVLMLAWIFLPIYIAG) form a helical membrane-spanning segment. Residues 124–180 (QVTTMPEYLKRRFGGSRIPITLASIYPSTHSLTILQVDMYAGAIFIQQSLHLDLYLA) lie on the Extracellular side of the membrane. Residues 181-201 (IVGLLAVTALYTVAGGLAAVI) form a helical membrane-spanning segment. At 202–208 (YTDALQT) the chain is on the cytoplasmic side. Residues 209–229 (VIMLIGAFILMGYSFAAVGGM) traverse the membrane as a helical segment. Over 230-272 (EGLKDQYFLALASNRSENSSCGLPREDAFHIFRDPLTSDLPWP) the chain is Extracellular. Residues 273–293 (GILFGMSIPSLWYWCTDQVIV) traverse the membrane as a helical segment. Over 294 to 308 (QRSLAAKNLSHAKGG) the chain is Cytoplasmic. Residues 309–329 (SLMAAYLKVLPLFLMVFPGMV) traverse the membrane as a helical segment. Topologically, residues 330–375 (SRILFPDQVACAHPDICQRVCSNPSGCSDIAYPKLVLELLPTGLRG) are extracellular. Residues 376 to 396 (LMMAVMVAALMSSLTSIFNSA) traverse the membrane as a helical segment. Residues 397–418 (STIFTMDLWHHIRPRASERELM) lie on the Cytoplasmic side of the membrane. Residues 419–439 (IVGRVFVLALVLVSILWIPVV) form a helical membrane-spanning segment. Over 440–446 (QASQGGQ) the chain is Extracellular. Residues 447–467 (LFIYIQSISSYLQPPVAVVFI) traverse the membrane as a helical segment. The Cytoplasmic segment spans residues 468 to 479 (MGCFWKRTNEKG). Residues 480-500 (AFSGLILGLLLGLVRLILDFV) traverse the membrane as a helical segment. Over 501 to 521 (YVQPRCDQPDDRPAVVKDVHY) the chain is Extracellular. A helical membrane pass occupies residues 522–542 (LYFSMILSSTTLITVFTVSWF). The Cytoplasmic portion of the chain corresponds to 543–652 (TETPSKEMVS…SLEENPLVKT (110 aa)). Residues 653 to 673 (LLDVNCIVCISCAIFLWGYFA) traverse the membrane as a helical segment.

This sequence belongs to the sodium:solute symporter (SSF) (TC 2.A.21) family. Expressed in kidney and small intestine.

The protein resides in the membrane. It is found in the apical cell membrane. It catalyses the reaction myo-inositol(out) + 2 Na(+)(out) = myo-inositol(in) + 2 Na(+)(in). The catalysed reaction is 1D-chiro-inositol(out) + 2 Na(+)(out) = 1D-chiro-inositol(in) + 2 Na(+)(in). The enzyme catalyses D-glucose(out) + 2 Na(+)(out) = D-glucose(in) + 2 Na(+)(in). It carries out the reaction D-xylose(out) + 2 Na(+)(out) = D-xylose(in) + 2 Na(+)(in). MI transport activity inhibited by D-chiro-inositol (DCI), phlorizin (Pz) and sodium (Na(+)). Insulin increases D-chiro-inositol uptake. Involved in the sodium-dependent cotransport of myo-inositol (MI) with a Na(+):MI stoichiometry of 2:1. Exclusively responsible for apical MI transport and absorption in intestine. Can also transport D-chiro-inositol (DCI) but not L-fucose. Exhibits stereospecific cotransport of both D-glucose and D-xylose. May induce apoptosis through the TNF-alpha, PDCD1 pathway. May play a role in the regulation of MI concentration in serum, involving reabsorption in at least the proximal tubule of the kidney. The protein is Sodium/myo-inositol cotransporter 2 of Rattus norvegicus (Rat).